Here is a 289-residue protein sequence, read N- to C-terminus: Putative 2-aminoethylphosphonate transport system permease protein PhnU (289 aa).

Helical transmembrane passes span W19–V39, F76–I96, F111–G131, F150–M170, V202–T222, and Y254–L274. The region spanning L68–Y275 is the ABC transmembrane type-1 domain.

Belongs to the binding-protein-dependent transport system permease family.

It localises to the cell inner membrane. In terms of biological role, probably part of the PhnSTUV complex (TC 3.A.1.11.5) involved in 2-aminoethylphosphonate import. Probably responsible for the translocation of the substrate across the membrane. This chain is Putative 2-aminoethylphosphonate transport system permease protein PhnU (phnU), found in Salmonella typhi.